The primary structure comprises 379 residues: Queuine tRNA-ribosyltransferase (379 aa).

Asp-94 serves as the catalytic Proton acceptor. Residues 94-98, Asp-148, Gln-191, and Gly-218 contribute to the substrate site; that span reads DSGGF. The segment at 249–255 is RNA binding; the sequence is GVGSPDA. The active-site Nucleophile is Asp-268. The RNA binding; important for wobble base 34 recognition stretch occupies residues 273–277; it reads TRIAR. 4 residues coordinate Zn(2+): Cys-306, Cys-308, Cys-311, and His-337.

The protein belongs to the queuine tRNA-ribosyltransferase family. As to quaternary structure, homodimer. Within each dimer, one monomer is responsible for RNA recognition and catalysis, while the other monomer binds to the replacement base PreQ1. It depends on Zn(2+) as a cofactor.

It carries out the reaction 7-aminomethyl-7-carbaguanine + guanosine(34) in tRNA = 7-aminomethyl-7-carbaguanosine(34) in tRNA + guanine. It participates in tRNA modification; tRNA-queuosine biosynthesis. Its function is as follows. Catalyzes the base-exchange of a guanine (G) residue with the queuine precursor 7-aminomethyl-7-deazaguanine (PreQ1) at position 34 (anticodon wobble position) in tRNAs with GU(N) anticodons (tRNA-Asp, -Asn, -His and -Tyr). Catalysis occurs through a double-displacement mechanism. The nucleophile active site attacks the C1' of nucleotide 34 to detach the guanine base from the RNA, forming a covalent enzyme-RNA intermediate. The proton acceptor active site deprotonates the incoming PreQ1, allowing a nucleophilic attack on the C1' of the ribose to form the product. After dissociation, two additional enzymatic reactions on the tRNA convert PreQ1 to queuine (Q), resulting in the hypermodified nucleoside queuosine (7-(((4,5-cis-dihydroxy-2-cyclopenten-1-yl)amino)methyl)-7-deazaguanosine). The protein is Queuine tRNA-ribosyltransferase of Staphylococcus haemolyticus (strain JCSC1435).